The sequence spans 88 residues: Large ribosomal subunit protein bL27 (88 aa).

The segment at 1 to 21 (MAHKKGQGSTQNNRDSAGRRL) is disordered.

This sequence belongs to the bacterial ribosomal protein bL27 family.

The polypeptide is Large ribosomal subunit protein bL27 (Helicobacter pylori (strain J99 / ATCC 700824) (Campylobacter pylori J99)).